Here is a 103-residue protein sequence, read N- to C-terminus: Small ribosomal subunit protein uS10 (103 aa).

Belongs to the universal ribosomal protein uS10 family. In terms of assembly, part of the 30S ribosomal subunit.

Involved in the binding of tRNA to the ribosomes. This is Small ribosomal subunit protein uS10 from Chlorobium luteolum (strain DSM 273 / BCRC 81028 / 2530) (Pelodictyon luteolum).